The chain runs to 199 residues: Nicotinamide riboside kinase 1 (199 aa).

Residue 10-18 (GVTNSGKTT) coordinates ATP. Mg(2+) is bound by residues T17 and D36. D36 (proton acceptor) is an active-site residue. Residues 36 to 39 (DDFF) and 55 to 56 (YD) each bind substrate. R128 lines the ATP pocket. Substrate-binding positions include R129 and 134 to 135 (YQ). Residues 132-134 (RVY) and 172-174 (KSE) each bind ATP.

The protein belongs to the uridine kinase family. NRK subfamily. As to quaternary structure, monomer.

It carries out the reaction beta-nicotinamide D-riboside + ATP = beta-nicotinamide D-ribonucleotide + ADP + H(+). The enzyme catalyses beta-D-ribosylnicotinate + ATP = nicotinate beta-D-ribonucleotide + ADP + H(+). It functions in the pathway cofactor biosynthesis; NAD(+) biosynthesis. Catalyzes the phosphorylation of nicotinamide riboside (NR) and nicotinic acid riboside (NaR) to form nicotinamide mononucleotide (NMN) and nicotinic acid mononucleotide (NaMN). The enzyme also phosphorylates the antitumor drugs tiazofurin and 3-deazaguanosine. The sequence is that of Nicotinamide riboside kinase 1 (NMRK1) from Homo sapiens (Human).